Here is a 314-residue protein sequence, read N- to C-terminus: Probable phytol kinase 1, chloroplastic (314 aa).

Residues 1-62 constitute a chloroplast transit peptide; sequence MAAAARPVDV…GVGAAAAPAV (62 aa). 7 helical membrane-spanning segments follow: residues 72 to 91, 111 to 131, 135 to 155, 181 to 201, 234 to 254, 266 to 286, and 294 to 314; these read AALRDCAATLLITAGAYSLV, IVHVLSGVLFMSSWPLFSNST, FFAAIVPLLNCIRLLTYGLRL, YVIVLLVSVLVFWRQSPIGIV, IGSISMFISGFLLSALMLFYF, LALGKLALVALAATVVECIPV, and ISVPLATMLAAYLLFGYSSCC.

The protein belongs to the polyprenol kinase family.

The protein localises to the plastid. Its subcellular location is the chloroplast membrane. The catalysed reaction is phytol + CTP = phytyl phosphate + CDP + H(+). It participates in cofactor biosynthesis; tocopherol biosynthesis. In terms of biological role, involved in the activation and reutilization of phytol from chlorophyll degradation in plant metabolism, including tocopherol biosynthesis. Catalyzes the conversion of phytol to phytol monophosphate (PMP). In Oryza sativa subsp. japonica (Rice), this protein is Probable phytol kinase 1, chloroplastic.